Consider the following 2799-residue polypeptide: Peramine synthetase ppzA (2799 aa).

Residues 270 to 666 (QERCRLQPNA…VGRKDTQVKI (397 aa)) form an adenylation 1 region. One can recognise a Carrier 1 domain in the interval 799–875 (QPLTGMERLL…DLSRQSRYIE (77 aa)). An O-(pantetheine 4'-phosphoryl)serine modification is found at Ser836. The condensation stretch occupies residues 914–1327 (DAYPCTPLQE…ITILTTEDLE (414 aa)). An adenylation 2 region spans residues 1350–1743 (DKVQARPNAP…TLSFVRRKDT (394 aa)). Residues 1874 to 1970 (LEIGCGSGMM…EYLVKLIQDI (97 aa)) form a methylation (Met) domain region. The 79-residue stretch at 2290–2368 (SPTTDMEKEL…RLLLDCCCDD (79 aa)) folds into the Carrier 2 domain. Ser2327 carries the post-translational modification O-(pantetheine 4'-phosphoryl)serine. A thiesterase (TE) domain region spans residues 2420–2737 (TVLLTGANGF…LADMLQDLED (318 aa)).

This sequence belongs to the NRP synthetase family. Pantetheine 4'-phosphate serves as cofactor.

The enzyme catalyses (S)-1-pyrroline-5-carboxylate + L-arginine + S-adenosyl-L-methionine + 2 ATP = peramine + 2 AMP + S-adenosyl-L-homocysteine + 2 diphosphate + H2O + 2 H(+). It functions in the pathway secondary metabolite biosynthesis. Its function is as follows. Nonribosomal peptide synthetase; part of the gene cluster that mediates the biosynthesis of pyrrolopyrazines, secondary metabolites showing insecticidal activity. The single multifunctional NRPS ppzA is responsible for the biosynthesis of peramine. The condensation domain of ppzA is proposed to catalyze formation of a peptide bond between 1-pyrroline-5-carboxylate and arginine. The methylation domain of ppzA would catalyze the N-methylation of the alpha-amino group of arginine. The reductase domain is proposed to be responsible for reduction of the thioester and the cyclization to form an iminium ion resulting in release from the peptide synthetase. Deprotonation of this intermediate and oxidation of the pyrroline ring would give rise to peramine. This final oxidation to give the pyrrole functionality may be spontaneous. In Epichloe species that produce only peramine, the peramine synthetase gene is not localized in a gene cluster, in contrast to Metarhizium species that contain additional pyrrolopyrazine biosynthesis genes. The 2-oxoglutarate-Fe(II) type oxidoreductase ppzC hydroxylates peramine to yield the newly identified compound 8-hydroxyperamine whereas ppzD converts L-proline into trans-4-hydroxy-L-proline, a precursor of peramine biosynthesis. In Metarhizium majus (strain ARSEF 297), this protein is Peramine synthetase ppzA.